Reading from the N-terminus, the 407-residue chain is Frizzled/smoothened-like sans CRD protein J (407 aa).

Positions 1–23 (MKFLFSVILVIISFLGISKIVNG) are cleaved as a signal peptide. The Extracellular segment spans residues 24–89 (QIACPSPFLY…WNSFNKLVKQ (66 aa)). A glycan (N-linked (GlcNAc...) asparagine) is linked at asparagine 37. A helical membrane pass occupies residues 90–110 (MGAVAFTCSAIIMIIYGPLMN). Residues 111–120 (RSFFKFDRHT) lie on the Cytoplasmic side of the membrane. The helical transmembrane segment at 121–141 (ITVFCFALSTFFIGVSDLMFA) threads the bilayer. At 142–169 (TNDVDMVCPESHRYARQTDKTCATNGVL) the chain is on the extracellular side. The helical transmembrane segment at 170-190 (FQFGWLGSVMWFAFLSIDGFF) threads the bilayer. Residues 191–199 (RASGKKMNK) are Cytoplasmic-facing. A helical membrane pass occupies residues 200–220 (IAFAIVLASIWILNIVLSFAP). Topologically, residues 221–246 (MGGDQYGAYFVGQVNCWILVKNWQYA) are extracellular. The chain crosses the membrane as a helical span at residues 247 to 267 (FFWAELIVSLAIGFVGICLTI). Topologically, residues 268-285 (YSLIRKTSDGNTLKHVTP) are cytoplasmic. A helical transmembrane segment spans residues 286–306 (LILVFLLFCQYLYMIIFYGII). The Extracellular portion of the chain corresponds to 307–354 (NEKKDHYQNILAEQVGCIFNNALAKMKVPGIVYAGECTFNETITFSSQ). A glycan (N-linked (GlcNAc...) asparagine) is linked at asparagine 346. Residues 355–375 (YAFLFFVRLLGIEIFAFYLFS) form a helical membrane-spanning segment. Over 376 to 407 (KETLLLIKSSYIATMFGLGDKDAYDVELEETD) the chain is Cytoplasmic.

This sequence belongs to the G-protein coupled receptor Fz/Smo family.

It localises to the membrane. This chain is Frizzled/smoothened-like sans CRD protein J (fscJ), found in Dictyostelium discoideum (Social amoeba).